Here is a 136-residue protein sequence, read N- to C-terminus: Galectin-7 (136 aa).

Residues 6–136 form the Galectin domain; it reads HKTPLPQGVR…DVQLHSVKIF (131 aa). 70–76 serves as a coordination point for a beta-D-galactoside; the sequence is WGREERG.

In terms of assembly, monomer.

The protein resides in the cytoplasm. The protein localises to the nucleus. It localises to the secreted. Could be involved in cell-cell and/or cell-matrix interactions necessary for normal growth control. Pro-apoptotic protein that functions intracellularly upstream of JNK activation and cytochrome c release. This is Galectin-7 (Lgals7) from Rattus norvegicus (Rat).